A 117-amino-acid polypeptide reads, in one-letter code: Large ribosomal subunit protein uL18 (117 aa).

Belongs to the universal ribosomal protein uL18 family. Part of the 50S ribosomal subunit; part of the 5S rRNA/L5/L18/L25 subcomplex. Contacts the 5S and 23S rRNAs.

Its function is as follows. This is one of the proteins that bind and probably mediate the attachment of the 5S RNA into the large ribosomal subunit, where it forms part of the central protuberance. The sequence is that of Large ribosomal subunit protein uL18 from Actinobacillus pleuropneumoniae serotype 5b (strain L20).